A 120-amino-acid polypeptide reads, in one-letter code: Dihydroneopterin triphosphate 2'-epimerase (120 aa).

It belongs to the DHNA family. Homooctamer.

It carries out the reaction 7,8-dihydroneopterin 3'-triphosphate = 7,8-dihydromonapterin 3'-triphosphate. Functionally, catalyzes the epimerization of carbon 2' of the side chain of 7,8-dihydroneopterin triphosphate (H2NTP) to form 7,8-dihydromonapterin triphosphate (H2MTP). Is required for tetrahydromonapterin biosynthesis. This Escherichia coli O157:H7 protein is Dihydroneopterin triphosphate 2'-epimerase (folX).